The primary structure comprises 438 residues: Adenylosuccinate synthetase (438 aa).

GTP contacts are provided by residues 13–19 and 41–43; these read GDEGKGK and GHT. D14 functions as the Proton acceptor in the catalytic mechanism. 2 residues coordinate Mg(2+): D14 and G41. IMP-binding positions include 14 to 17, 39 to 42, T130, R144, Q225, T240, and R312; these read DEGK and NAGH. H42 acts as the Proton donor in catalysis. 308–314 contributes to the substrate binding site; it reads ATTGRQR. GTP is bound by residues R314, 340–342, and 422–424; these read KLD and STG.

Belongs to the adenylosuccinate synthetase family. As to quaternary structure, homodimer. Requires Mg(2+) as cofactor.

The protein localises to the cytoplasm. The catalysed reaction is IMP + L-aspartate + GTP = N(6)-(1,2-dicarboxyethyl)-AMP + GDP + phosphate + 2 H(+). It functions in the pathway purine metabolism; AMP biosynthesis via de novo pathway; AMP from IMP: step 1/2. Plays an important role in the de novo pathway of purine nucleotide biosynthesis. Catalyzes the first committed step in the biosynthesis of AMP from IMP. The polypeptide is Adenylosuccinate synthetase (Ruthia magnifica subsp. Calyptogena magnifica).